Reading from the N-terminus, the 229-residue chain is Uridylate kinase (229 aa).

11-12 (GS) contacts ATP. G45 is a UMP binding site. ATP-binding residues include G46 and R50. UMP-binding positions include D67 and 114-120 (TEPGHTT). ATP contacts are provided by T140, Y146, and D149.

It belongs to the UMP kinase family. In terms of assembly, homohexamer.

It is found in the cytoplasm. The enzyme catalyses UMP + ATP = UDP + ADP. The protein operates within pyrimidine metabolism; CTP biosynthesis via de novo pathway; UDP from UMP (UMPK route): step 1/1. Inhibited by UTP. Its function is as follows. Catalyzes the reversible phosphorylation of UMP to UDP. This chain is Uridylate kinase, found in Thermoplasma acidophilum (strain ATCC 25905 / DSM 1728 / JCM 9062 / NBRC 15155 / AMRC-C165).